The primary structure comprises 2371 residues: Reducing polyketide synthase DEP5 (2371 aa).

In terms of domain architecture, Ketosynthase family 3 (KS3) spans 47-477 (LEPIAVVGMG…GTNAHTIIES (431 aa)). Catalysis depends on for beta-ketoacyl synthase activity residues cysteine 221, histidine 358, and histidine 399. The interval 593–905 (VFTGQGAQWA…QYLPTLIRGS (313 aa)) is malonyl-CoA:ACP transacylase (MAT) domain. Serine 685 acts as the For malonyltransferase activity in catalysis. An N-terminal hotdog fold region spans residues 982 to 1120 (HDVLGQLTIG…GSIRINTSNK (139 aa)). A dehydratase (DH) domain region spans residues 982–1158 (HDVLGQLTIG…FNYGPTFQDM (177 aa)). Residues 982-1286 (HDVLGQLTIG…CTAYEAAIPQ (305 aa)) enclose the PKS/mFAS DH domain. The Proton acceptor; for dehydratase activity role is filled by histidine 1014. The segment at 1132 to 1286 (PQRASGKLWN…CTAYEAAIPQ (155 aa)) is C-terminal hotdog fold. The Proton donor; for dehydratase activity role is filled by aspartate 1195. An enoyl reductase (ER) domain region spans residues 1656-1964 (GKVEAGKVVF…QSLSSTETVL (309 aa)). The interval 1988–2163 (ATYLLVGCLG…KHACAVVLPM (176 aa)) is ketoreductase (KR) domain. Positions 2286 to 2364 (SLVRDHFISK…KFAELVCAAQ (79 aa)) constitute a Carrier domain. O-(pantetheine 4'-phosphoryl)serine is present on serine 2323.

It participates in polyketide biosynthesis. Part of the gene cluster that mediates the biosynthesis of depudecin, a highly oxidized eleven-carbon linear polyketide that acts as a histone deacetylase (HDAC) inhibitor and makes a small contribution to pathogenesis. The reducing polyketide synthase DEP5 is the central enzyme in depudecin biosynthesis by yielding the backbone polyketide chain. The monooxygenases DEP2 and DEP4, as well as the uncharacterized protein DEP1, then act as tailoring enzymes to modify the intermediate polyketide chain into depudecin. In Fusarium langsethiae, this protein is Reducing polyketide synthase DEP5.